The chain runs to 142 residues: Large ribosomal subunit protein uL11 (142 aa).

Positions 86–105 are disordered; it reads LKSGSKEPGKQSAGQISRAK.

This sequence belongs to the universal ribosomal protein uL11 family. Part of the ribosomal stalk of the 50S ribosomal subunit. Interacts with L10 and the large rRNA to form the base of the stalk. L10 forms an elongated spine to which L12 dimers bind in a sequential fashion forming a multimeric L10(L12)X complex. Post-translationally, one or more lysine residues are methylated.

Functionally, forms part of the ribosomal stalk which helps the ribosome interact with GTP-bound translation factors. The sequence is that of Large ribosomal subunit protein uL11 from Chelativorans sp. (strain BNC1).